The following is a 763-amino-acid chain: DNA polymerase 3 (763 aa).

Belongs to the DNA polymerase type-B family.

It carries out the reaction DNA(n) + a 2'-deoxyribonucleoside 5'-triphosphate = DNA(n+1) + diphosphate. This Saccharolobus shibatae (strain ATCC 51178 / DSM 5389 / JCM 8931 / NBRC 15437 / B12) (Sulfolobus shibatae) protein is DNA polymerase 3 (dpo3).